We begin with the raw amino-acid sequence, 1736 residues long: Collagen alpha-2(XI) chain (1736 aa).

Residues 1-27 (MERCSRCHHLLLLVLLLLWLSAAPAWA) form the signal peptide. The Laminin G-like domain occupies 57 to 228 (DVAYRVSRPA…ESCDQKELEC (172 aa)). Residues 215-486 (QAAYESCDQK…ILQQARVALR (272 aa)) are nonhelical region. Disordered regions lie at residues 229 to 465 (EGGW…DKGP) and 485 to 1539 (LRGP…SPGG). Over residues 258–270 (PQNQEPQAQSTES) the composition is skewed to polar residues. A compositionally biased stretch (low complexity) spans 363–376 (ALSAETARSEAAAR). Collagen-like domains are found at residues 399–447 (GPPG…GPPG), 487–545 (GPPG…ADGA), and 546–587 (RGMP…PPGE). The span at 400–413 (PPGPEGPAGFPGPP) shows a compositional bias: pro residues. The triple-helical region stretch occupies residues 487–1500 (GPPGPMGYTG…PGHPGPPGEV (1014 aa)). Residues 515 to 533 (DLGPQGPRGPQGLMGPPGK) are compositionally biased toward low complexity. Over residues 615–624 (KGPPGIPGPP) the composition is skewed to pro residues. Positions 650-663 (QQGTPGTQGLPGPQ) are enriched in low complexity. Residues 765–774 (RGEDGPEGPK) show a composition bias toward basic and acidic residues. The span at 842–861 (PTGPRGQRGPRGATGKSGAK) shows a compositional bias: low complexity. The segment covering 994–1003 (GTAGGPGLKG) has biased composition (gly residues). The span at 1029–1040 (IGPPGRPGPQGP) shows a compositional bias: pro residues. 2 consecutive Collagen-like domains span residues 1072 to 1127 (GPAG…ADGE) and 1128 to 1172 (PGAR…ETGD). Residues 1115 to 1133 (PVGQPGAAGADGEPGARGP) show a composition bias toward low complexity. Over residues 1176–1187 (MGPPGPPGPRGP) the composition is skewed to pro residues. Positions 1217–1230 (ESGSPGVQGEPGVK) are enriched in low complexity. Basic and acidic residues-rich tracts occupy residues 1232–1241 (PRGERGEKGE) and 1287–1296 (DGAKGDRGED). Composition is skewed to low complexity over residues 1341-1364 (PGAV…KPGP) and 1376-1386 (QQGRPGATGQA). Residues 1388–1397 (PPGPVGPPGL) are compositionally biased toward pro residues. The segment covering 1413–1422 (PGLIGLIGPP) has biased composition (low complexity). Positions 1444-1499 (GETGIPGASGPIGPGGPPGLPGPAGPKGAKGATGPAGPKGEKGVQGPPGHPGPPGE) constitute a Collagen-like 6 domain. The span at 1457–1467 (PGGPPGLPGPA) shows a compositional bias: pro residues. The span at 1469–1481 (PKGAKGATGPAGP) shows a compositional bias: low complexity. A propeptide spans 1501-1736 (IQPLPIQMPK…VLLGPVCFMG (236 aa)) (C-terminal propeptide). The region spanning 1541-1735 (EEIFGSLDSL…GVLLGPVCFM (195 aa)) is the Fibrillar collagen NC1 domain. An intrachain disulfide couples cysteine 1571 to cysteine 1603. Ca(2+)-binding residues include aspartate 1589, asparagine 1591, glutamine 1592, cysteine 1594, and aspartate 1597. N-linked (GlcNAc...) asparagine glycosylation is found at asparagine 1604 and asparagine 1650. 2 disulfide bridges follow: cysteine 1612-cysteine 1733 and cysteine 1655-cysteine 1689.

It belongs to the fibrillar collagen family. In terms of assembly, trimers composed of three different chains: alpha 1(XI), alpha 2(XI), and alpha 3(XI). Alpha 3(XI) is a post-translational modification of alpha 1(II). Alpha 1(V) can also be found instead of alpha 3(XI)=1(II). Post-translationally, prolines at the third position of the tripeptide repeating unit (G-X-Y) are hydroxylated in some or all of the chains.

It is found in the secreted. Its subcellular location is the extracellular space. It localises to the extracellular matrix. Its function is as follows. May play an important role in fibrillogenesis by controlling lateral growth of collagen II fibrils. This chain is Collagen alpha-2(XI) chain (COL11A2), found in Bos taurus (Bovine).